The sequence spans 254 residues: Vitamin B12 import ATP-binding protein BtuD (254 aa).

Positions 1–239 (MHINHISVGN…ENLQQVFETP (239 aa)) constitute an ABC transporter domain. 29 to 36 (GPNGSGKS) contacts ATP.

It belongs to the ABC transporter superfamily. Vitamin B12 importer (TC 3.A.1.13.1) family. In terms of assembly, the complex is composed of two ATP-binding proteins (BtuD), two transmembrane proteins (BtuC) and a solute-binding protein (BtuF).

Its subcellular location is the cell inner membrane. It catalyses the reaction an R-cob(III)alamin(out) + ATP + H2O = an R-cob(III)alamin(in) + ADP + phosphate + H(+). Its function is as follows. Part of the ABC transporter complex BtuCDF involved in vitamin B12 import. Responsible for energy coupling to the transport system. The polypeptide is Vitamin B12 import ATP-binding protein BtuD (Vibrio vulnificus (strain YJ016)).